A 142-amino-acid polypeptide reads, in one-letter code: Large ribosomal subunit protein uL11 (142 aa).

This sequence belongs to the universal ribosomal protein uL11 family. As to quaternary structure, part of the ribosomal stalk of the 50S ribosomal subunit. Interacts with L10 and the large rRNA to form the base of the stalk. L10 forms an elongated spine to which L12 dimers bind in a sequential fashion forming a multimeric L10(L12)X complex. One or more lysine residues are methylated.

In terms of biological role, forms part of the ribosomal stalk which helps the ribosome interact with GTP-bound translation factors. The sequence is that of Large ribosomal subunit protein uL11 from Bradyrhizobium sp. (strain BTAi1 / ATCC BAA-1182).